Reading from the N-terminus, the 194-residue chain is AN1-type zinc finger protein 2A (194 aa).

2 AN1-type zinc fingers span residues 4–52 and 94–142; these read PDLG…QKDV and KIFT…RPTI. Residues Cys-10, Cys-15, Cys-25, Cys-28, Cys-33, His-36, His-42, Cys-44, Cys-100, Cys-105, Cys-115, Cys-118, Cys-123, His-126, His-132, and Cys-134 each contribute to the Zn(2+) site. The interval 145–164 is disordered; it reads GCSPVTASESKPSGDPHPGS.

Its subcellular location is the cytoplasm. The protein localises to the nucleus. The sequence is that of AN1-type zinc finger protein 2A (ZFAND2A) from Pongo abelii (Sumatran orangutan).